Reading from the N-terminus, the 447-residue chain is Probable glycine dehydrogenase (decarboxylating) subunit 1 (447 aa).

It belongs to the GcvP family. N-terminal subunit subfamily. The glycine cleavage system is composed of four proteins: P, T, L and H. In this organism, the P 'protein' is a heterodimer of two subunits.

The enzyme catalyses N(6)-[(R)-lipoyl]-L-lysyl-[glycine-cleavage complex H protein] + glycine + H(+) = N(6)-[(R)-S(8)-aminomethyldihydrolipoyl]-L-lysyl-[glycine-cleavage complex H protein] + CO2. Functionally, the glycine cleavage system catalyzes the degradation of glycine. The P protein binds the alpha-amino group of glycine through its pyridoxal phosphate cofactor; CO(2) is released and the remaining methylamine moiety is then transferred to the lipoamide cofactor of the H protein. The polypeptide is Probable glycine dehydrogenase (decarboxylating) subunit 1 (Bacillus cereus (strain ATCC 10987 / NRS 248)).